Here is a 392-residue protein sequence, read N- to C-terminus: Leucine-rich repeat-containing protein 74B (392 aa).

The disordered stretch occupies residues 24-46 (RLSGVPEAEQGPEANWDSDLETE). 9 LRR repeats span residues 106–129 (NPYV…ALAG), 134–157 (SSSI…ALCA), 162–185 (NQAM…HLAE), 192–213 (DLKS…TLGP), 220–241 (GLTE…AFAR), 248–269 (FLKV…AVGE), 276–297 (VLEE…SLGL), 304–325 (TLRI…GLLK), and 334–356 (ALEL…ASSV).

This Homo sapiens (Human) protein is Leucine-rich repeat-containing protein 74B.